The primary structure comprises 112 residues: Ferredoxin, plant-type (112 aa).

In terms of domain architecture, 2Fe-2S ferredoxin-type spans Tyr-6 to Val-97. Residues Cys-41, Cys-46, Cys-49, and Cys-81 each coordinate [2Fe-2S] cluster.

This sequence belongs to the 2Fe2S plant-type ferredoxin family.

The protein operates within aromatic compound metabolism; catechol degradation. Functionally, ferredoxins are iron-sulfur proteins that transfer electrons in a wide variety of metabolic reactions. The protein is Ferredoxin, plant-type (xylT) of Pseudomonas putida (Arthrobacter siderocapsulatus).